The primary structure comprises 86 residues: Omega-theraphotoxin-Hhn1f 1 (86 aa).

An N-terminal signal peptide occupies residues 1–21 (MKSIVFVALFGLALLAVVCSA). Positions 22–50 (SEDAHKELLKEVVRAMVVDKTDAVQAEER) are excised as a propeptide. 3 disulfide bridges follow: Cys52/Cys66, Cys59/Cys71, and Cys65/Cys78.

The protein belongs to the neurotoxin 10 (Hwtx-1) family. 17 (Hntx-9) subfamily. Expressed by the venom gland.

The protein localises to the secreted. Ion channel inhibitor. The protein is Omega-theraphotoxin-Hhn1f 1 of Cyriopagopus hainanus (Chinese bird spider).